The sequence spans 357 residues: Holliday junction branch migration complex subunit RuvB (357 aa).

Residues 1-20 are disordered; the sequence is MDDHDDSPVSPSFLKSDGEI. The tract at residues 1-185 is large ATPase domain (RuvB-L); that stretch reads MDDHDDSPVS…FGFTGHMDFY (185 aa). Residues Leu24, Arg25, Gly66, Lys69, Thr70, Ser71, 132–134, Arg175, Tyr185, and Arg222 contribute to the ATP site; that span reads EDF. Mg(2+) is bound at residue Thr70. Positions 186–256 are small ATPAse domain (RuvB-S); that stretch reads EPGELLRILE…VARAALEVYD (71 aa). The head domain (RuvB-H) stretch occupies residues 259 to 357; the sequence is TLGLDRLDRA…TSQPTLDLFD (99 aa). 2 residues coordinate DNA: Arg314 and Arg319.

It belongs to the RuvB family. In terms of assembly, homohexamer. Forms an RuvA(8)-RuvB(12)-Holliday junction (HJ) complex. HJ DNA is sandwiched between 2 RuvA tetramers; dsDNA enters through RuvA and exits via RuvB. An RuvB hexamer assembles on each DNA strand where it exits the tetramer. Each RuvB hexamer is contacted by two RuvA subunits (via domain III) on 2 adjacent RuvB subunits; this complex drives branch migration. In the full resolvosome a probable DNA-RuvA(4)-RuvB(12)-RuvC(2) complex forms which resolves the HJ.

It localises to the cytoplasm. The enzyme catalyses ATP + H2O = ADP + phosphate + H(+). Its function is as follows. The RuvA-RuvB-RuvC complex processes Holliday junction (HJ) DNA during genetic recombination and DNA repair, while the RuvA-RuvB complex plays an important role in the rescue of blocked DNA replication forks via replication fork reversal (RFR). RuvA specifically binds to HJ cruciform DNA, conferring on it an open structure. The RuvB hexamer acts as an ATP-dependent pump, pulling dsDNA into and through the RuvAB complex. RuvB forms 2 homohexamers on either side of HJ DNA bound by 1 or 2 RuvA tetramers; 4 subunits per hexamer contact DNA at a time. Coordinated motions by a converter formed by DNA-disengaged RuvB subunits stimulates ATP hydrolysis and nucleotide exchange. Immobilization of the converter enables RuvB to convert the ATP-contained energy into a lever motion, pulling 2 nucleotides of DNA out of the RuvA tetramer per ATP hydrolyzed, thus driving DNA branch migration. The RuvB motors rotate together with the DNA substrate, which together with the progressing nucleotide cycle form the mechanistic basis for DNA recombination by continuous HJ branch migration. Branch migration allows RuvC to scan DNA until it finds its consensus sequence, where it cleaves and resolves cruciform DNA. The chain is Holliday junction branch migration complex subunit RuvB from Nocardia farcinica (strain IFM 10152).